Reading from the N-terminus, the 159-residue chain is uncharacterized protein (159 aa).

Residues 7-151 enclose the N-acetyltransferase domain; sequence LLINYKTLEE…NPLIWEPAHI (145 aa).

This is an uncharacterized protein from Bacillus pumilus (strain SAFR-032).